The sequence spans 383 residues: MKNVLPPFIEIYRALIATPSISATEESLDQSNASLITLLAGWFSDLGFNVEVQPVPGTRNKFNMLASTGHGAGGLLLTGHTDTVPFDDGRWTRDPFTLTEHDNKLYGLGTADMKGFFAFILDALRDVDVTKLKKPLYILATADEETSMAGARYFSETTALRPDCAIIGEPTSLQPIRAHKGHISNVVRVLGQSGHSSDPARGVNAIELMHDAIGHIMQLRDSLKARYHYEAFTVPYPTLNLGHIHGGDASNRICACCELHMDIRPLPGMTLNDLNGLLNDALAPVSERWPGRLTVAELHPPIPGYECPPDHQLVEVVEKLLGTKTDVVNYCTEAPFMQTLCPTLVLGPCSINQAHQPDEYLETRFIKPTRELITQVVHHFCWH.

His-80 is a binding site for Zn(2+). Asp-82 is an active-site residue. Position 112 (Asp-112) interacts with Zn(2+). Glu-144 is a catalytic residue. Zn(2+)-binding residues include Glu-145, Glu-169, and His-355.

It belongs to the peptidase M20A family. ArgE subfamily. Homodimer. Zn(2+) is required as a cofactor. Requires Co(2+) as cofactor. Glutathione serves as cofactor.

Its subcellular location is the cytoplasm. It catalyses the reaction N(2)-acetyl-L-ornithine + H2O = L-ornithine + acetate. It participates in amino-acid biosynthesis; L-arginine biosynthesis; L-ornithine from N(2)-acetyl-L-ornithine (linear): step 1/1. In terms of biological role, catalyzes the hydrolysis of the amide bond of N(2)-acetylated L-amino acids. Cleaves the acetyl group from N-acetyl-L-ornithine to form L-ornithine, an intermediate in L-arginine biosynthesis pathway, and a branchpoint in the synthesis of polyamines. The protein is Acetylornithine deacetylase of Salmonella typhi.